We begin with the raw amino-acid sequence, 223 residues long: Cytochrome c biogenesis ATP-binding export protein CcmA (223 aa).

Positions 20–222 (LAAHALTYSR…PTRLLHLKKA (203 aa)) constitute an ABC transporter domain. 52 to 59 (GPNGIGKT) contributes to the ATP binding site.

Belongs to the ABC transporter superfamily. CcmA exporter (TC 3.A.1.107) family. As to quaternary structure, the complex is composed of two ATP-binding proteins (CcmA) and two transmembrane proteins (CcmB).

The protein localises to the cell inner membrane. It catalyses the reaction heme b(in) + ATP + H2O = heme b(out) + ADP + phosphate + H(+). In terms of biological role, part of the ABC transporter complex CcmAB involved in the biogenesis of c-type cytochromes; once thought to export heme, this seems not to be the case, but its exact role is uncertain. Responsible for energy coupling to the transport system. The protein is Cytochrome c biogenesis ATP-binding export protein CcmA of Xylella fastidiosa (strain 9a5c).